The following is a 206-amino-acid chain: Large ribosomal subunit protein bL25 (206 aa).

Belongs to the bacterial ribosomal protein bL25 family. CTC subfamily. Part of the 50S ribosomal subunit; part of the 5S rRNA/L5/L18/L25 subcomplex. Contacts the 5S rRNA. Binds to the 5S rRNA independently of L5 and L18.

In terms of biological role, this is one of the proteins that binds to the 5S RNA in the ribosome where it forms part of the central protuberance. The protein is Large ribosomal subunit protein bL25 of Bartonella henselae (strain ATCC 49882 / DSM 28221 / CCUG 30454 / Houston 1) (Rochalimaea henselae).